A 357-amino-acid polypeptide reads, in one-letter code: Peptide chain release factor 1 (357 aa).

An N5-methylglutamine modification is found at Q233.

The protein belongs to the prokaryotic/mitochondrial release factor family. In terms of processing, methylated by PrmC. Methylation increases the termination efficiency of RF1.

The protein localises to the cytoplasm. Its function is as follows. Peptide chain release factor 1 directs the termination of translation in response to the peptide chain termination codons UAG and UAA. This Leuconostoc citreum (strain KM20) protein is Peptide chain release factor 1.